A 514-amino-acid polypeptide reads, in one-letter code: Probable WRKY transcription factor 4 (514 aa).

Disordered stretches follow at residues 1-28 (MSEKEEAPSTSKSTGAPSRPTLSLPPRP), 175-204 (QPQTEYPPPSQVQSFSSGQAQIPTSAPLPA), and 278-394 (YKGQ…TVTE). Composition is skewed to polar residues over residues 185–198 (QVQSFSSGQAQIPT) and 286–299 (PPQNTKRGNKDNTA). Residues 223 to 287 (NVDKPADDGY…YKGQHNHEPP (65 aa)) constitute a DNA-binding region (WRKY 1). Over residues 300 to 313 (NINGSSINNNRGSS) the composition is skewed to low complexity. Positions 315-326 (LGASQFQTNSSN) are enriched in polar residues. The segment covering 359–380 (TDVREKDENEPDPKRRSTEVRI) has biased composition (basic and acidic residues). The segment at residues 403-468 (SEVDLLDDGY…YEGKHNHDLP (66 aa)) is a DNA-binding region (WRKY 2). Zn(2+) contacts are provided by Cys-434, Thr-436, Cys-439, His-463, and His-465. Residues 464–514 (NHDLPAAKSSSHAAAAAQLRPDNRPGGLANLNQQQQQQPVARLRLKEEQTT) are disordered. Low complexity predominate over residues 469 to 480 (AAKSSSHAAAAA).

In young, mature and senescent leaves.

Its subcellular location is the nucleus. Its function is as follows. Transcription factor that binds specifically to the W box (5'-(T)TGAC[CT]-3'), a frequently occurring elicitor-responsive cis-acting element. Has a positive role in resistance to necrotrophic pathogens (e.g. Botrytis cinerea), but a negative effect on plant resistance to biotrophic pathogens (e.g. Pseudomonas syringae). This is Probable WRKY transcription factor 4 (WRKY4) from Arabidopsis thaliana (Mouse-ear cress).